We begin with the raw amino-acid sequence, 342 residues long: Foldase protein PrsA (342 aa).

A signal peptide spans 1–20 (MKKKLILAAAGAMAVFSLAA). The N-palmitoyl cysteine moiety is linked to residue Cys21. Cys21 carries the S-diacylglycerol cysteine lipid modification. Residues 142-235 (HPEVEAQIIQ…QTYQTTYYVV (94 aa)) form the PpiC domain. The tract at residues 297–342 (MQTESSSASSEKKESKSSDSKTSDTKTSDSEKATDSSSKTTESSSK) is disordered. Over residues 306-330 (SEKKESKSSDSKTSDTKTSDSEKAT) the composition is skewed to basic and acidic residues. Residues 331-342 (DSSSKTTESSSK) are compositionally biased toward low complexity.

This sequence belongs to the PrsA family.

The protein resides in the cell membrane. The enzyme catalyses [protein]-peptidylproline (omega=180) = [protein]-peptidylproline (omega=0). Its function is as follows. Plays a major role in protein secretion by helping the post-translocational extracellular folding of several secreted proteins. This is Foldase protein PrsA from Enterococcus faecalis (strain ATCC 700802 / V583).